The following is a 296-amino-acid chain: 4-hydroxy-tetrahydrodipicolinate synthase (296 aa).

T50 provides a ligand contact to pyruvate. The active-site Proton donor/acceptor is the Y138. The active-site Schiff-base intermediate with substrate is the K166. Residue I208 coordinates pyruvate.

This sequence belongs to the DapA family. As to quaternary structure, homotetramer; dimer of dimers.

It is found in the cytoplasm. It carries out the reaction L-aspartate 4-semialdehyde + pyruvate = (2S,4S)-4-hydroxy-2,3,4,5-tetrahydrodipicolinate + H2O + H(+). It functions in the pathway amino-acid biosynthesis; L-lysine biosynthesis via DAP pathway; (S)-tetrahydrodipicolinate from L-aspartate: step 3/4. Functionally, catalyzes the condensation of (S)-aspartate-beta-semialdehyde [(S)-ASA] and pyruvate to 4-hydroxy-tetrahydrodipicolinate (HTPA). In Thiobacillus denitrificans (strain ATCC 25259 / T1), this protein is 4-hydroxy-tetrahydrodipicolinate synthase.